The following is a 315-amino-acid chain: ATP synthase gamma chain (315 aa).

Belongs to the ATPase gamma chain family. F-type ATPases have 2 components, CF(1) - the catalytic core - and CF(0) - the membrane proton channel. CF(1) has five subunits: alpha(3), beta(3), gamma(1), delta(1), epsilon(1). CF(0) has three main subunits: a, b and c.

Its subcellular location is the cellular thylakoid membrane. Produces ATP from ADP in the presence of a proton gradient across the membrane. The gamma chain is believed to be important in regulating ATPase activity and the flow of protons through the CF(0) complex. The protein is ATP synthase gamma chain of Nostoc punctiforme (strain ATCC 29133 / PCC 73102).